Consider the following 194-residue polypeptide: Der GTPase-activating protein YihI (194 aa).

Residues 1–81 (MSRSKKTRRI…AKVKKDPRVG (81 aa)) are disordered. Composition is skewed to basic and acidic residues over residues 9 to 23 (RISD…DKKP) and 36 to 47 (TRYELDVQAREE). Positions 59 to 70 (GSRNVITEQKTA) are enriched in polar residues.

Belongs to the YihI family. In terms of assembly, interacts with Der.

In terms of biological role, a GTPase-activating protein (GAP) that modifies Der/EngA GTPase function. May play a role in ribosome biogenesis. In Haemophilus ducreyi (strain 35000HP / ATCC 700724), this protein is Der GTPase-activating protein YihI.